Reading from the N-terminus, the 64-residue chain is Short neurotoxin 1 (64 aa).

4 cysteine pairs are disulfide-bonded: C3–C26, C20–C43, C45–C56, and C57–C62.

The protein belongs to the three-finger toxin family. Short-chain subfamily. Type I alpha-neurotoxin sub-subfamily. Expressed by the venom gland.

It localises to the secreted. In terms of biological role, binds to muscle nicotinic acetylcholine receptor (nAChR) and inhibit acetylcholine from binding to the receptor, thereby impairing neuromuscular transmission. This chain is Short neurotoxin 1, found in Bungarus fasciatus (Banded krait).